Here is a 392-residue protein sequence, read N- to C-terminus: Obg-like ATPase 1 (392 aa).

In terms of domain architecture, OBG-type G spans 21–285 (LKTGIVGMPN…FTEEEAIEEC (265 aa)). 30 to 35 (NVGKST) is an ATP binding site. Positions 34 and 55 each coordinate Mg(2+). Met-233 is a binding site for ATP. Residues 306–389 (NLINYFTCGE…ESGDIAHWKA (84 aa)) enclose the TGS domain.

The protein belongs to the TRAFAC class OBG-HflX-like GTPase superfamily. OBG GTPase family. YchF/OLA1 subfamily. Monomer. Mg(2+) serves as cofactor.

The protein localises to the cytoplasm. It localises to the nucleus. Hydrolyzes ATP, and can also hydrolyze GTP with lower efficiency. Has lower affinity for GTP. Negatively regulates the G2/M transition in the cell cycle. The chain is Obg-like ATPase 1 from Schizosaccharomyces pombe (strain 972 / ATCC 24843) (Fission yeast).